Here is a 176-residue protein sequence, read N- to C-terminus: Probable Brix domain-containing ribosomal biogenesis protein (176 aa).

Residues 6 to 176 enclose the Brix domain; the sequence is IEIVFTSSRD…QLYDRNKNIN (171 aa).

Functionally, probably involved in the biogenesis of the ribosome. The protein is Probable Brix domain-containing ribosomal biogenesis protein of Sulfurisphaera tokodaii (strain DSM 16993 / JCM 10545 / NBRC 100140 / 7) (Sulfolobus tokodaii).